A 262-amino-acid polypeptide reads, in one-letter code: Small ribosomal subunit protein uS2 (262 aa).

The segment at 228-262 is disordered; the sequence is VSNEEVAAEQNIDLDESKEATEAETTEENTSVESN.

It belongs to the universal ribosomal protein uS2 family.

This Staphylococcus saprophyticus subsp. saprophyticus (strain ATCC 15305 / DSM 20229 / NCIMB 8711 / NCTC 7292 / S-41) protein is Small ribosomal subunit protein uS2.